Reading from the N-terminus, the 105-residue chain is Large ribosomal subunit protein uL24 (105 aa).

This sequence belongs to the universal ribosomal protein uL24 family. As to quaternary structure, part of the 50S ribosomal subunit.

In terms of biological role, one of two assembly initiator proteins, it binds directly to the 5'-end of the 23S rRNA, where it nucleates assembly of the 50S subunit. Its function is as follows. One of the proteins that surrounds the polypeptide exit tunnel on the outside of the subunit. The chain is Large ribosomal subunit protein uL24 from Dictyoglomus turgidum (strain DSM 6724 / Z-1310).